A 384-amino-acid polypeptide reads, in one-letter code: 23S rRNA (uracil(747)-C(5))-methyltransferase RlmC (384 aa).

[4Fe-4S] cluster contacts are provided by Cys7, Cys15, Cys18, and Cys94. S-adenosyl-L-methionine is bound by residues Gln219, Phe248, Glu269, and Asn316. Cys343 functions as the Nucleophile in the catalytic mechanism.

The protein belongs to the class I-like SAM-binding methyltransferase superfamily. RNA M5U methyltransferase family. RlmC subfamily.

The catalysed reaction is uridine(747) in 23S rRNA + S-adenosyl-L-methionine = 5-methyluridine(747) in 23S rRNA + S-adenosyl-L-homocysteine + H(+). Functionally, catalyzes the formation of 5-methyl-uridine at position 747 (m5U747) in 23S rRNA. This is 23S rRNA (uracil(747)-C(5))-methyltransferase RlmC from Shewanella sp. (strain MR-7).